The sequence spans 278 residues: Sulfur carrier protein FdhD (278 aa).

The Cysteine persulfide intermediate role is filled by Cys-121. 260–265 is a Mo-bis(molybdopterin guanine dinucleotide) binding site; sequence FCKPGR.

It belongs to the FdhD family.

Its subcellular location is the cytoplasm. Functionally, required for formate dehydrogenase (FDH) activity. Acts as a sulfur carrier protein that transfers sulfur from IscS to the molybdenum cofactor prior to its insertion into FDH. This chain is Sulfur carrier protein FdhD, found in Salmonella typhi.